A 164-amino-acid polypeptide reads, in one-letter code: uncharacterized protein (164 aa).

This is an uncharacterized protein from Saccharomyces cerevisiae (strain ATCC 204508 / S288c) (Baker's yeast).